We begin with the raw amino-acid sequence, 415 residues long: Serine/threonine transporter SstT (415 aa).

Helical transmembrane passes span 21–41 (ILLG…AALA), 45–65 (LGTL…LVLV), 85–105 (FLYL…SVLF), 142–162 (ALLN…GIAF), 193–213 (LGIF…ALWG), 217–237 (LLMV…PLIV), 289–309 (VAIP…ITVL), and 331–351 (VVAS…LLLI).

This sequence belongs to the dicarboxylate/amino acid:cation symporter (DAACS) (TC 2.A.23) family.

The protein resides in the cell inner membrane. It carries out the reaction L-serine(in) + Na(+)(in) = L-serine(out) + Na(+)(out). The enzyme catalyses L-threonine(in) + Na(+)(in) = L-threonine(out) + Na(+)(out). In terms of biological role, involved in the import of serine and threonine into the cell, with the concomitant import of sodium (symport system). The polypeptide is Serine/threonine transporter SstT (Pectobacterium atrosepticum (strain SCRI 1043 / ATCC BAA-672) (Erwinia carotovora subsp. atroseptica)).